The following is a 441-amino-acid chain: Endoglucanase E-2 (441 aa).

The tat-type signal signal peptide spans Met-1–Ala-31. A catalytic region spans residues Asn-32–Thr-320. Residue Asp-110 is part of the active site. Cystine bridges form between Cys-111–Cys-156 and Cys-263–Cys-298. Catalysis depends on Asp-148, which acts as the Proton donor. Asp-296 (nucleophile) is an active-site residue. Residues Ala-317–Ser-343 form a disordered region. Positions Asn-321–Pro-340 are linker. A compositionally biased stretch (pro residues) spans Asn-323–Gly-341. The 103-residue stretch at Pro-339–Ser-441 folds into the CBM2 domain. An intrachain disulfide couples Cys-346 to Cys-438.

The protein belongs to the glycosyl hydrolase 6 (cellulase B) family. In terms of assembly, homodimer. In terms of processing, predicted to be exported by the Tat system. The position of the signal peptide cleavage has been experimentally proven.

It carries out the reaction Endohydrolysis of (1-&gt;4)-beta-D-glucosidic linkages in cellulose, lichenin and cereal beta-D-glucans.. It participates in glycan metabolism; cellulose degradation. This is Endoglucanase E-2 (celB) from Thermobifida fusca (Thermomonospora fusca).